We begin with the raw amino-acid sequence, 115 residues long: Large ribosomal subunit protein bL20 (115 aa).

The protein belongs to the bacterial ribosomal protein bL20 family.

In terms of biological role, binds directly to 23S ribosomal RNA and is necessary for the in vitro assembly process of the 50S ribosomal subunit. It is not involved in the protein synthesizing functions of that subunit. The protein is Large ribosomal subunit protein bL20 of Myxococcus xanthus (strain DK1622).